A 725-amino-acid chain; its full sequence is uncharacterized protein (725 aa).

The FtsK domain maps to 363–556 (GTYVEIPLYS…FVTTRPEDSC (194 aa)). ATP is bound at residue 382–389 (GRTRGGKS).

Belongs to the FtsK/SpoIIIE/SftA family.

Its function is as follows. Probable DNA motor protein. May track DNA in a ATP-dependent manner by generating positive supercoils in front of it and negative supercoils behind it. This is an uncharacterized protein from Nostoc sp. (strain PCC 7120 / SAG 25.82 / UTEX 2576).